Reading from the N-terminus, the 163-residue chain is MAENTNDSQVVETEEELTNYTTETNAGAGTGTSAIEPGYGTGRRKEAVARVRLVPGDGKWTINGRTLEEYFPSKLLQREVNSPIVLLKLEGKFDAIVLVDGGGTTGQAGAIRLGVARALNAIDRDANRAALKKAGFLTRDARVVERKKAGLHKARRAPQFSKR.

The segment covering 1–11 (MAENTNDSQVV) has biased composition (polar residues). Residues 1-40 (MAENTNDSQVVETEEELTNYTTETNAGAGTGTSAIEPGYG) form a disordered region. Residues 18 to 27 (TNYTTETNAG) show a composition bias toward low complexity.

The protein belongs to the universal ribosomal protein uS9 family.

This Bifidobacterium longum (strain DJO10A) protein is Small ribosomal subunit protein uS9.